Consider the following 428-residue polypeptide: C4-dicarboxylate transport protein (428 aa).

Transmembrane regions (helical) follow at residues 8–28 (SLYFQVLTAIAIGILLGHFYP), 44–64 (LIKMIIAPVIFCTVVTGIAGM), 76–96 (VALLYFEIVSTIALIIGLIIV), 142–162 (IGAFASGNILQVLLFAVLFGF), 184–204 (VIFGIINMIMRLAPIGAFGAM), 222–242 (LIICFYITCILFVVLVLGSIA), 326–346 (IVHQITLLIVLLLSSKGAAGV), and 352–372 (IVLAATLSAVGHLPVAGLALI).

This sequence belongs to the dicarboxylate/amino acid:cation symporter (DAACS) (TC 2.A.23) family.

It localises to the cell inner membrane. Functionally, responsible for the transport of dicarboxylates such as succinate, fumarate, and malate from the periplasm across the membrane. The sequence is that of C4-dicarboxylate transport protein from Escherichia coli O127:H6 (strain E2348/69 / EPEC).